Reading from the N-terminus, the 462-residue chain is Alkaline ceramidase TOD1 (462 aa).

Residues 1–18 are Cytoplasmic-facing; the sequence is MGKFITTTLSPPLYARSK. The chain crosses the membrane as a helical span at residues 19–39; sequence LLCFSLLYLFSTIFLFLYVSL. Topologically, residues 40–462 are lumenal; it reads SRNQCIFRYS…CKNYLTDMWG (423 aa). N121, N132, and N449 each carry an N-linked (GlcNAc...) asparagine glycan.

This sequence belongs to the alkaline ceramidase family. As to expression, preferentially expressed in pollen grains, pollen tubes and silique guard cells, but barely detectable in roots, stems and leaves.

Its subcellular location is the golgi apparatus membrane. The catalysed reaction is an N-acylsphing-4-enine + H2O = sphing-4-enine + a fatty acid. It participates in lipid metabolism. Its function is as follows. Endoplasmic reticulum ceramidase that catalyzes the hydrolysis of ceramides into sphingosine and free fatty acids at alkaline pH (e.g. pH 9.5). Inactive on phytoceramide. Involved in the regulation of turgor pressure in guard cells and pollen tubes. The chain is Alkaline ceramidase TOD1 from Arabidopsis thaliana (Mouse-ear cress).